Here is a 156-residue protein sequence, read N- to C-terminus: Small ribosomal subunit protein uS7 (156 aa).

It belongs to the universal ribosomal protein uS7 family. As to quaternary structure, part of the 30S ribosomal subunit. Contacts proteins S9 and S11.

Functionally, one of the primary rRNA binding proteins, it binds directly to 16S rRNA where it nucleates assembly of the head domain of the 30S subunit. Is located at the subunit interface close to the decoding center, probably blocks exit of the E-site tRNA. This Geobacter sp. (strain M21) protein is Small ribosomal subunit protein uS7.